The following is a 49-amino-acid chain: Large ribosomal subunit protein bL33A (49 aa).

It belongs to the bacterial ribosomal protein bL33 family.

The protein is Large ribosomal subunit protein bL33A of Leuconostoc mesenteroides subsp. mesenteroides (strain ATCC 8293 / DSM 20343 / BCRC 11652 / CCM 1803 / JCM 6124 / NCDO 523 / NBRC 100496 / NCIMB 8023 / NCTC 12954 / NRRL B-1118 / 37Y).